The following is a 1461-amino-acid chain: Phospholipid-transporting ATPase VB (1461 aa).

Over 1–82 (MALSVDSSWH…TTKYTLFTFL (82 aa)) the chain is Cytoplasmic. A helical membrane pass occupies residues 83 to 104 (PRNLFEQFHRWANLYFLFLVIL). Over 105–110 (NWMPSM) the chain is Exoplasmic loop. Residues 111-132 (EVFHREITMLPLAIVLFVIMIK) traverse the membrane as a helical segment. At 133–316 (DGMEDFKRHR…SKIERRMNID (184 aa)) the chain is on the cytoplasmic side. The chain crosses the membrane as a helical span at residues 317 to 338 (IFFCIGILILMCLIGAVGHSIW). At 339-368 (NGTFEEHPPFDVPDANGSFLPSALGGFYMF) the chain is on the exoplasmic loop side. A helical transmembrane segment spans residues 369 to 390 (LTMIILLQVLIPISLYVSIELV). At 391–1111 (KLGQVFFLSN…GHWCYSRLAR (721 aa)) the chain is on the cytoplasmic side. Aspartate 433 (4-aspartylphosphate intermediate) is an active-site residue. ATP is bound by residues aspartate 433, lysine 434, and threonine 435. Aspartate 433 serves as a coordination point for Mg(2+). Threonine 435 is a binding site for Mg(2+). 2 stretches are compositionally biased toward polar residues: residues 496–511 (MRSQ…SQSA) and 530–539 (SQPPVAFSSS). 2 disordered regions span residues 496–541 (MRSQ…SSIE) and 640–687 (TAPS…MWDQ). The ATP site is built by glutamate 724, phenylalanine 766, lysine 790, arginine 835, threonine 915, glycine 916, aspartate 917, arginine 1029, and lysine 1035. Residue aspartate 1055 coordinates Mg(2+). 2 residues coordinate ATP: asparagine 1058 and aspartate 1059. Residue aspartate 1059 coordinates Mg(2+). The helical transmembrane segment at 1112–1132 (MVVYYLYKNVCYVNLLFWYQF) threads the bilayer. The Exoplasmic loop segment spans residues 1133–1144 (FCGFSSSTMIDY). Residues 1145-1164 (WQMIFFNLFFTSLPPLVFGV) form a helical membrane-spanning segment. Topologically, residues 1165–1194 (LDKDISAETLLALPELYKSGQNSECYNLST) are cytoplasmic. Residues 1195–1216 (FWISMVDAFYQSLICFFIPYLA) form a helical membrane-spanning segment. Over 1217-1223 (YKGSDID) the chain is Exoplasmic loop. Residues 1224-1246 (VFTFGTPINTISLTTILLHQAME) traverse the membrane as a helical segment. At 1247-1252 (MKTWTI) the chain is on the cytoplasmic side. A helical membrane pass occupies residues 1253–1273 (FHGVVLLGSFLMYFLVSLLYN). Residues 1274 to 1291 (ATCVICNSPTNPYWVMEG) lie on the Exoplasmic loop side of the membrane. A helical membrane pass occupies residues 1292–1316 (QLSNPTFYLVCFLTPVVALLPRYFF). At 1317-1461 (LSLQGTCGKS…HRRSQSSLTI (145 aa)) the chain is on the cytoplasmic side. The disordered stretch occupies residues 1346–1397 (IQSWRSRQRPAPVPEVARPTHHPVSSITGQDFSASTPKSSNPPKRKHVEESV). Polar residues predominate over residues 1368–1387 (PVSSITGQDFSASTPKSSNP).

Belongs to the cation transport ATPase (P-type) (TC 3.A.3) family. Type IV subfamily. As to quaternary structure, component of a P4-ATPase flippase complex which consists of a catalytic alpha subunit ATP10B and an accessory beta subunit TMEM30A. Requires Mg(2+) as cofactor. Autophosphorylated at the conserved aspartate of the P-type ATPase signature sequence. In terms of tissue distribution, expressed in predominantly in brain structures including medulla oblongata, substantia nigra and basal ganglia. Expressed in the gastrointestinal system with highest levels in the small intestine and colon. Also expressed at low levels in testis and thymus.

It localises to the late endosome membrane. It is found in the lysosome membrane. The protein resides in the endoplasmic reticulum membrane. The catalysed reaction is ATP + H2O + phospholipidSide 1 = ADP + phosphate + phospholipidSide 2.. It carries out the reaction a beta-D-glucosyl-(1&lt;-&gt;1')-N-acylsphing-4-enine(out) + ATP + H2O = a beta-D-glucosyl-(1&lt;-&gt;1')-N-acylsphing-4-enine(in) + ADP + phosphate + H(+). In terms of biological role, catalytic component of a P4-ATPase flippase complex, which catalyzes the hydrolysis of ATP coupled to the transport of glucosylceramide (GlcCer) from the outer to the inner leaflet of lysosome membranes. Plays an important role in the maintenance of lysosome membrane integrity and function in cortical neurons. This is Phospholipid-transporting ATPase VB from Homo sapiens (Human).